Reading from the N-terminus, the 214-residue chain is Cytochrome c biogenesis ATP-binding export protein CcmA (214 aa).

Positions Leu8–Val212 constitute an ABC transporter domain. Residue Gly40–Thr47 coordinates ATP.

This sequence belongs to the ABC transporter superfamily. CcmA exporter (TC 3.A.1.107) family. The complex is composed of two ATP-binding proteins (CcmA) and two transmembrane proteins (CcmB).

It localises to the cell inner membrane. The enzyme catalyses heme b(in) + ATP + H2O = heme b(out) + ADP + phosphate + H(+). Its function is as follows. Part of the ABC transporter complex CcmAB involved in the biogenesis of c-type cytochromes; once thought to export heme, this seems not to be the case, but its exact role is uncertain. Responsible for energy coupling to the transport system. This chain is Cytochrome c biogenesis ATP-binding export protein CcmA, found in Aromatoleum aromaticum (strain DSM 19018 / LMG 30748 / EbN1) (Azoarcus sp. (strain EbN1)).